The sequence spans 468 residues: Alcohol dehydrogenase (quinone), cytochrome c subunit (468 aa).

An N-terminal signal peptide occupies residues 1–23; sequence MINRLKVTFSAAAFSLLAGTALA. 3 Cytochrome c domains span residues 31–134, 178–293, and 317–407; these read ALVQ…MHGV, PEIA…KSLP, and TASV…RTSW. Heme c contacts are provided by C45, C48, H49, C193, C196, H197, C330, C333, and H334.

The alcohol dehydrogenase multicomponent enzyme system is composed of a dehydrogenase subunit I (AdhA) and a cytochrome c subunit II (AdhB). The cofactor is heme c.

Its subcellular location is the cell membrane. It carries out the reaction ethanol + a ubiquinone = a ubiquinol + acetaldehyde. Functionally, cytochrome c component of the alcohol dehydrogenase multicomponent enzyme system which is involved in the production of acetic acid and in the ethanol oxidase respiratory chain. Quinohemoprotein alcohol dehydrogenase (ADH) catalyzes the oxidation of ethanol to acetaldehyde by transferring electrons to the ubiquinone embedded in the membrane phospholipids. The electrons transfer from ethanol to membranous ubiquinone occurs from pyrroloquinoline quinone (PQQ) to one heme c in subunit I (AdhA), and finally to two heme c in subunit II (AdhB). Besides ubiquinone reduction, ADH also has a ubiquinol (QH2) oxidation reaction which mediates electron transfer from ubiquinol to the non-energy generating bypass oxidase system. The electrons transfer occurs from ubiquinol (QH2) to the additional heme c within subunit II (AdhB). This Gluconacetobacter polyoxogenes (Acetobacter polyoxogenes) protein is Alcohol dehydrogenase (quinone), cytochrome c subunit.